We begin with the raw amino-acid sequence, 287 residues long: Thymidylate synthase (287 aa).

R21 serves as a coordination point for dUMP. (6R)-5,10-methylene-5,6,7,8-tetrahydrofolate is bound at residue H51. 150-151 (RR) is a dUMP binding site. C170 acts as the Nucleophile in catalysis. Residues 190–193 (RSGD), N201, and 231–233 (HIY) contribute to the dUMP site. D193 contacts (6R)-5,10-methylene-5,6,7,8-tetrahydrofolate. A286 contacts (6R)-5,10-methylene-5,6,7,8-tetrahydrofolate.

This sequence belongs to the thymidylate synthase family. Bacterial-type ThyA subfamily. Homodimer.

It localises to the cytoplasm. The enzyme catalyses dUMP + (6R)-5,10-methylene-5,6,7,8-tetrahydrofolate = 7,8-dihydrofolate + dTMP. It functions in the pathway pyrimidine metabolism; dTTP biosynthesis. Its function is as follows. Catalyzes the reductive methylation of 2'-deoxyuridine-5'-monophosphate (dUMP) to 2'-deoxythymidine-5'-monophosphate (dTMP) while utilizing 5,10-methylenetetrahydrofolate (mTHF) as the methyl donor and reductant in the reaction, yielding dihydrofolate (DHF) as a by-product. This enzymatic reaction provides an intracellular de novo source of dTMP, an essential precursor for DNA biosynthesis. This is Thymidylate synthase from Mycoplasma pneumoniae (strain ATCC 29342 / M129 / Subtype 1) (Mycoplasmoides pneumoniae).